A 104-amino-acid chain; its full sequence is Phosphoribosyl-ATP pyrophosphatase (104 aa).

This sequence belongs to the PRA-PH family.

It is found in the cytoplasm. It catalyses the reaction 1-(5-phospho-beta-D-ribosyl)-ATP + H2O = 1-(5-phospho-beta-D-ribosyl)-5'-AMP + diphosphate + H(+). Its pathway is amino-acid biosynthesis; L-histidine biosynthesis; L-histidine from 5-phospho-alpha-D-ribose 1-diphosphate: step 2/9. The polypeptide is Phosphoribosyl-ATP pyrophosphatase (Erythrobacter litoralis (strain HTCC2594)).